Reading from the N-terminus, the 206-residue chain is Large ribosomal subunit protein uL4 (206 aa).

This sequence belongs to the universal ribosomal protein uL4 family. In terms of assembly, part of the 50S ribosomal subunit.

Its function is as follows. One of the primary rRNA binding proteins, this protein initially binds near the 5'-end of the 23S rRNA. It is important during the early stages of 50S assembly. It makes multiple contacts with different domains of the 23S rRNA in the assembled 50S subunit and ribosome. In terms of biological role, forms part of the polypeptide exit tunnel. The chain is Large ribosomal subunit protein uL4 from Methylorubrum populi (strain ATCC BAA-705 / NCIMB 13946 / BJ001) (Methylobacterium populi).